The chain runs to 483 residues: Glutamyl-tRNA(Gln) amidotransferase subunit A (483 aa).

Catalysis depends on charge relay system residues K76 and S151. S175 functions as the Acyl-ester intermediate in the catalytic mechanism.

The protein belongs to the amidase family. GatA subfamily. Heterotrimer of A, B and C subunits.

It catalyses the reaction L-glutamyl-tRNA(Gln) + L-glutamine + ATP + H2O = L-glutaminyl-tRNA(Gln) + L-glutamate + ADP + phosphate + H(+). Functionally, allows the formation of correctly charged Gln-tRNA(Gln) through the transamidation of misacylated Glu-tRNA(Gln) in organisms which lack glutaminyl-tRNA synthetase. The reaction takes place in the presence of glutamine and ATP through an activated gamma-phospho-Glu-tRNA(Gln). The sequence is that of Glutamyl-tRNA(Gln) amidotransferase subunit A from Pseudomonas fluorescens (strain SBW25).